The following is a 1212-amino-acid chain: DNA-directed RNA polymerase subunit beta' (1212 aa).

Cys60, Cys62, Cys75, and Cys78 together coordinate Zn(2+). 3 residues coordinate Mg(2+): Asp450, Asp452, and Asp454. Residues Cys819, Cys893, Cys900, and Cys903 each contribute to the Zn(2+) site.

This sequence belongs to the RNA polymerase beta' chain family. In terms of assembly, the RNAP catalytic core consists of 2 alpha, 1 beta, 1 beta' and 1 omega subunit. When a sigma factor is associated with the core the holoenzyme is formed, which can initiate transcription. Mg(2+) serves as cofactor. The cofactor is Zn(2+).

The enzyme catalyses RNA(n) + a ribonucleoside 5'-triphosphate = RNA(n+1) + diphosphate. DNA-dependent RNA polymerase catalyzes the transcription of DNA into RNA using the four ribonucleoside triphosphates as substrates. The chain is DNA-directed RNA polymerase subunit beta' from Streptococcus thermophilus (strain CNRZ 1066).